The chain runs to 141 residues: Large ribosomal subunit protein uL11 (141 aa).

Belongs to the universal ribosomal protein uL11 family. As to quaternary structure, part of the ribosomal stalk of the 50S ribosomal subunit. Interacts with L10 and the large rRNA to form the base of the stalk. L10 forms an elongated spine to which L12 dimers bind in a sequential fashion forming a multimeric L10(L12)X complex. Post-translationally, one or more lysine residues are methylated.

Functionally, forms part of the ribosomal stalk which helps the ribosome interact with GTP-bound translation factors. In Chlamydia abortus (strain DSM 27085 / S26/3) (Chlamydophila abortus), this protein is Large ribosomal subunit protein uL11.